The chain runs to 194 residues: MGEVKAGGPSTRVMEGSEHGFATTRVDALLNWAKKYSLFQYPFVTACCGMEYMAMASPRFDMARFGAEVPRFSPRQADLLWVVGTISQRQAPALKRIYEQMADPKWVLAFGTCASCGGFYDNYTTVAGIDKVIPCDVYVPGCPPRPEAVLDGLMLLQDKIARGDRTPAIVKPREDPAQTTEHLVTLQRKERSLP.

[4Fe-4S] cluster-binding residues include C47, C48, C113, and C142.

Belongs to the complex I 20 kDa subunit family. In terms of assembly, NDH-1 is composed of 14 different subunits. Subunits NuoB, C, D, E, F, and G constitute the peripheral sector of the complex. The cofactor is [4Fe-4S] cluster.

The protein resides in the cell inner membrane. It catalyses the reaction a quinone + NADH + 5 H(+)(in) = a quinol + NAD(+) + 4 H(+)(out). In terms of biological role, NDH-1 shuttles electrons from NADH, via FMN and iron-sulfur (Fe-S) centers, to quinones in the respiratory chain. The immediate electron acceptor for the enzyme in this species is believed to be ubiquinone. Couples the redox reaction to proton translocation (for every two electrons transferred, four hydrogen ions are translocated across the cytoplasmic membrane), and thus conserves the redox energy in a proton gradient. The sequence is that of NADH-quinone oxidoreductase subunit B 1 from Sorangium cellulosum (strain So ce56) (Polyangium cellulosum (strain So ce56)).